The following is a 224-amino-acid chain: Ribonuclease HII (224 aa).

The 211-residue stretch at 7 to 217 (STIMGIDEAG…SNAVIADCLQ (211 aa)) folds into the RNase H type-2 domain. Positions 13, 14, and 111 each coordinate a divalent metal cation.

It belongs to the RNase HII family. Mn(2+) is required as a cofactor. It depends on Mg(2+) as a cofactor.

The protein resides in the cytoplasm. It carries out the reaction Endonucleolytic cleavage to 5'-phosphomonoester.. In terms of biological role, endonuclease that specifically degrades the RNA of RNA-DNA hybrids. The sequence is that of Ribonuclease HII from Methanocella arvoryzae (strain DSM 22066 / NBRC 105507 / MRE50).